A 125-amino-acid chain; its full sequence is Secreted RxLR effector protein RXLR-C13 (125 aa).

An N-terminal signal peptide occupies residues 1-23; it reads MVNSLTFTLVVVCLVRSCDGVAA. A RxLR-dEER motif is present at residues 43–73; that stretch reads RVLQETATANDDVKKLSTSTKVDSKLNQEIK. Asn-85 is a glycosylation site (N-linked (GlcNAc...) asparagine). Residues 106–123 traverse the membrane as a helical segment; the sequence is FFILATILLFPIAAYMVA.

This sequence belongs to the RxLR effector family.

Its subcellular location is the secreted. It localises to the host endoplasmic reticulum membrane. Secreted effector that does not suppress pattern-triggered immunity (PTI) in plant host. The protein is Secreted RxLR effector protein RXLR-C13 of Plasmopara halstedii (Downy mildew of sunflower).